Consider the following 297-residue polypeptide: N-acetylmuramic acid 6-phosphate etherase (297 aa).

Residues 55–218 (AAAALTRGGR…STGAMVKCGK (164 aa)) form the SIS domain. Residue glutamate 83 is the Proton donor of the active site. The active site involves glutamate 114.

This sequence belongs to the GCKR-like family. MurNAc-6-P etherase subfamily. As to quaternary structure, homodimer.

It catalyses the reaction N-acetyl-D-muramate 6-phosphate + H2O = N-acetyl-D-glucosamine 6-phosphate + (R)-lactate. It functions in the pathway amino-sugar metabolism; 1,6-anhydro-N-acetylmuramate degradation. It participates in amino-sugar metabolism; N-acetylmuramate degradation. Its pathway is cell wall biogenesis; peptidoglycan recycling. Specifically catalyzes the cleavage of the D-lactyl ether substituent of MurNAc 6-phosphate, producing GlcNAc 6-phosphate and D-lactate. Together with AnmK, is also required for the utilization of anhydro-N-acetylmuramic acid (anhMurNAc) either imported from the medium or derived from its own cell wall murein, and thus plays a role in cell wall recycling. The protein is N-acetylmuramic acid 6-phosphate etherase of Cronobacter sakazakii (strain ATCC BAA-894) (Enterobacter sakazakii).